The primary structure comprises 235 residues: Triosephosphate isomerase (235 aa).

Position 7–9 (7–9 (NFK)) interacts with substrate. The active-site Electrophile is the His-92. Glu-161 acts as the Proton acceptor in catalysis. The substrate site is built by Gly-167 and Ser-197.

The protein belongs to the triosephosphate isomerase family. In terms of assembly, homodimer.

The protein localises to the cytoplasm. It catalyses the reaction D-glyceraldehyde 3-phosphate = dihydroxyacetone phosphate. Its pathway is carbohydrate biosynthesis; gluconeogenesis. The protein operates within carbohydrate degradation; glycolysis; D-glyceraldehyde 3-phosphate from glycerone phosphate: step 1/1. Functionally, involved in the gluconeogenesis. Catalyzes stereospecifically the conversion of dihydroxyacetone phosphate (DHAP) to D-glyceraldehyde-3-phosphate (G3P). This Helicobacter hepaticus (strain ATCC 51449 / 3B1) protein is Triosephosphate isomerase.